Reading from the N-terminus, the 249-residue chain is FMN reductase [NAD(P)H] (249 aa).

FMN-binding positions include 11–15 (HRSIR), Gln67, 134–136 (PIG), and 173–175 (KPR).

It belongs to the flavin oxidoreductase frp family. Homodimer.

It carries out the reaction FMNH2 + NADP(+) = FMN + NADPH + 2 H(+). The enzyme catalyses FMNH2 + NAD(+) = FMN + NADH + 2 H(+). With respect to regulation, FMN is a competitive inhibitor of NADH, and therefore leads to the preferential utilization of NADPH. Reduces FMNH(2) to FMN, with NADH or NADPH as reductant. It also reduces nitroaromatic compounds, quinones, chromates and azo dyes. It could supply the reduced form of FMN to luciferase-like protein and contribute to the degradation of aromatic compounds. The chain is FMN reductase [NAD(P)H] (nfrA2) from Bacillus subtilis (strain 168).